The primary structure comprises 521 residues: Probable inorganic phosphate transporter 1-3 (521 aa).

The Cytoplasmic segment spans residues 1-24 (MADQQLGVLKALDVAKTQLYHFTA). A helical transmembrane segment spans residues 25–45 (IVIAGMGFFTDAYDLFCVSLV). At 46-70 (TKLLGRLYYFNPTSAKPGSLPPHVA) the chain is on the extracellular side. The chain crosses the membrane as a helical span at residues 71–91 (AAVNGVALCGTLAGQLFFGWL). Topologically, residues 92–99 (GDKLGRKK) are cytoplasmic. A helical membrane pass occupies residues 100–120 (VYGITLIMMILCSVASGLSLG). Residues 121–131 (NSAKGVMTTLC) are Extracellular-facing. Residues 132–152 (FFRFWLGFGIGGDYPLSATIM) form a helical membrane-spanning segment. The Cytoplasmic portion of the chain corresponds to 153-161 (SEYANKKTR). The helical transmembrane segment at 162-182 (GAFIAAVFAMQGVGILAGGFV) threads the bilayer. Residues 183–211 (ALAVSSIFDKKFPSPTYEQDRFLSTPPQA) lie on the Extracellular side of the membrane. The helical transmembrane segment at 212–232 (DYIWRIIVMFGALPAALTYYW) threads the bilayer. Over 233-292 (RMKMPETARYTALVAKNIKQATADMSKVLQTDLELEERVEDDVKDPKKNYGLFSKEFLRR) the chain is Cytoplasmic. The helical transmembrane segment at 293–313 (HGLHLLGTTSTWFLLDIAFYS) threads the bilayer. Residues 314-348 (QNLFQKDIFSAIGWIPKAATMNAIHEVFKIARAQT) are Extracellular-facing. A helical transmembrane segment spans residues 349–369 (LIALCSTVPGYWFTVAFIDII). At 370-371 (GR) the chain is on the cytoplasmic side. A helical membrane pass occupies residues 372-392 (FAIQLMGFFMMTVFMFAIAFP). Topologically, residues 393 to 402 (YNHWILPDNR) are extracellular. A helical membrane pass occupies residues 403-423 (IGFVVMYSLTFFFANFGPNAT). The Cytoplasmic portion of the chain corresponds to 424–441 (TFIVPAEIFPARLRSTCH). The helical transmembrane segment at 442 to 462 (GISAATGKAGAIVGAFGFLYA) threads the bilayer. The Extracellular portion of the chain corresponds to 463-484 (AQPQDKTKTDAGYPPGIGVKNS). The helical transmembrane segment at 485–505 (LIMLGVINFVGMLFTFLVPEP) threads the bilayer. Topologically, residues 506–521 (KGKSLEELSGEAEVDK) are cytoplasmic.

The protein belongs to the major facilitator superfamily. Phosphate:H(+) symporter (TC 2.A.1.9) family. Mainly expressed in roots, especially in the stele of the primary root, the pericycle and trichoblasts of secondary roots. To a lower extent, present in hydathodes and vascular tissues of young leaves.

The protein localises to the membrane. High-affinity transporter for external inorganic phosphate. This is Probable inorganic phosphate transporter 1-3 (PHT1-3) from Arabidopsis thaliana (Mouse-ear cress).